A 258-amino-acid chain; its full sequence is Large ribosomal subunit protein bL28m (258 aa).

Residues 1 to 21 constitute a mitochondrion transit peptide; that stretch reads MQKIFRPFQLTRGFTSSVKNF.

Belongs to the bacterial ribosomal protein bL28 family. Component of the mitochondrial large ribosomal subunit (mt-LSU). Mature yeast 74S mitochondrial ribosomes consist of a small (37S) and a large (54S) subunit. The 37S small subunit contains a 15S ribosomal RNA (15S mt-rRNA) and 34 different proteins. The 54S large subunit contains a 21S rRNA (21S mt-rRNA) and 46 different proteins.

The protein localises to the mitochondrion. Functionally, component of the mitochondrial ribosome (mitoribosome), a dedicated translation machinery responsible for the synthesis of mitochondrial genome-encoded proteins, including at least some of the essential transmembrane subunits of the mitochondrial respiratory chain. The mitoribosomes are attached to the mitochondrial inner membrane and translation products are cotranslationally integrated into the membrane. The sequence is that of Large ribosomal subunit protein bL28m (MRPL24) from Saccharomyces cerevisiae (strain ATCC 204508 / S288c) (Baker's yeast).